We begin with the raw amino-acid sequence, 254 residues long: Phosphonates import ATP-binding protein PhnC (254 aa).

The region spanning 2–246 (IQLKNVSKIY…VFDDIYNGGN (245 aa)) is the ABC transporter domain. 35-42 (GLSGAGKS) serves as a coordination point for ATP.

This sequence belongs to the ABC transporter superfamily. Phosphonates importer (TC 3.A.1.9.1) family. As to quaternary structure, the complex is composed of two ATP-binding proteins (PhnC), two transmembrane proteins (PhnE) and a solute-binding protein (PhnD).

It localises to the cell membrane. The catalysed reaction is phosphonate(out) + ATP + H2O = phosphonate(in) + ADP + phosphate + H(+). Its function is as follows. Part of the ABC transporter complex PhnCDE involved in phosphonates import. Responsible for energy coupling to the transport system. The polypeptide is Phosphonates import ATP-binding protein PhnC (Lactobacillus johnsonii (strain CNCM I-12250 / La1 / NCC 533)).